Reading from the N-terminus, the 144-residue chain is Large ribosomal subunit protein uL15 (144 aa).

Residues 1-57 are disordered; that stretch reads MQLNDLRSAPGARREKHRPGRGIGSGLGKTGGRGHKGLTSRSGGKVAPGFEGGQQPL. Positions 21–31 are enriched in gly residues; it reads RGIGSGLGKTG.

This sequence belongs to the universal ribosomal protein uL15 family. As to quaternary structure, part of the 50S ribosomal subunit.

Its function is as follows. Binds to the 23S rRNA. This Pseudomonas aeruginosa (strain LESB58) protein is Large ribosomal subunit protein uL15.